We begin with the raw amino-acid sequence, 476 residues long: Aspartyl/glutamyl-tRNA(Asn/Gln) amidotransferase subunit B (476 aa).

The protein belongs to the GatB/GatE family. GatB subfamily. Heterotrimer of A, B and C subunits.

The catalysed reaction is L-glutamyl-tRNA(Gln) + L-glutamine + ATP + H2O = L-glutaminyl-tRNA(Gln) + L-glutamate + ADP + phosphate + H(+). It catalyses the reaction L-aspartyl-tRNA(Asn) + L-glutamine + ATP + H2O = L-asparaginyl-tRNA(Asn) + L-glutamate + ADP + phosphate + 2 H(+). Allows the formation of correctly charged Asn-tRNA(Asn) or Gln-tRNA(Gln) through the transamidation of misacylated Asp-tRNA(Asn) or Glu-tRNA(Gln) in organisms which lack either or both of asparaginyl-tRNA or glutaminyl-tRNA synthetases. The reaction takes place in the presence of glutamine and ATP through an activated phospho-Asp-tRNA(Asn) or phospho-Glu-tRNA(Gln). The chain is Aspartyl/glutamyl-tRNA(Asn/Gln) amidotransferase subunit B from Neisseria meningitidis serogroup C / serotype 2a (strain ATCC 700532 / DSM 15464 / FAM18).